The chain runs to 156 residues: Small ribosomal subunit protein uS7 (156 aa).

The protein belongs to the universal ribosomal protein uS7 family. As to quaternary structure, part of the 30S ribosomal subunit. Contacts proteins S9 and S11.

One of the primary rRNA binding proteins, it binds directly to 16S rRNA where it nucleates assembly of the head domain of the 30S subunit. Is located at the subunit interface close to the decoding center, probably blocks exit of the E-site tRNA. This Streptomyces avermitilis (strain ATCC 31267 / DSM 46492 / JCM 5070 / NBRC 14893 / NCIMB 12804 / NRRL 8165 / MA-4680) protein is Small ribosomal subunit protein uS7.